A 217-amino-acid polypeptide reads, in one-letter code: Lipid transferase CIDEA (217 aa).

One can recognise a CIDE-N domain in the interval 33–110 (PARPFRVSNH…ILEKGQKWTP (78 aa)). Residues 163–180 (CTSFKAVLRNLLRFMSYA) form an amphipathic helix region.

This sequence belongs to the CIDE family. Homodimer. Interacts with CIDEC. Directly interacts with CEBPB. Interacts with isoform CLSTN3beta of CLSTN3; inhibiting the lipid transferase activity of CIDEA. As to expression, highly expressed in brown adipose tissue and, at lower levels, in white adipose tissue (at protein level). Undetectable in undifferentiated preadipocytes. Expressed in mammary gland during pregnancy and lactation, in epithelial cells, but not in the surrounding adipose tissue. Secreted into milk via milk fat globules.

It localises to the lipid droplet. The protein localises to the nucleus. It carries out the reaction a triacyl-sn-glycerol(in) = a triacyl-sn-glycerol(out). Its function is as follows. Lipid transferase that promotes unilocular lipid droplet formation by mediating lipid droplet fusion. Lipid droplet fusion promotes their enlargement, restricting lipolysis and favoring lipid storage. Localizes on the lipid droplet surface, at focal contact sites between lipid droplets, and mediates atypical lipid droplet fusion by promoting directional net neutral lipid transfer from the smaller to larger lipid droplets. The transfer direction may be driven by the internal pressure difference between the contacting lipid droplet pair and occurs at a lower rate than that promoted by CIDEC. May also act as a CEBPB coactivator in epithelial cells to control the expression of a subset of CEBPB downstream target genes, including ID2, IGF1, PRLR, SOCS1, SOCS3, XDH, but not casein. By interacting with CEBPB, strengthens the association of CEBPB with the XDH promoter, increases histone acetylation and dissociates HDAC1 from the promoter. When overexpressed, induces apoptosis; the physiological significance of its role in apoptosis is unclear. This chain is Lipid transferase CIDEA, found in Mus musculus (Mouse).